Reading from the N-terminus, the 338-residue chain is Glyceraldehyde-3-phosphate dehydrogenase (338 aa).

Residues Thr-11–Ile-12 and Gly-111 each bind NAD(+). Ser-140–Asn-142 lines the D-glyceraldehyde 3-phosphate pocket. Cys-141 acts as the Nucleophile in catalysis. Arg-169 is an NAD(+) binding site. The segment at Gly-170–His-195 is disordered. His-195–Gly-196 contributes to the D-glyceraldehyde 3-phosphate binding site. Gln-302 provides a ligand contact to NAD(+).

It belongs to the glyceraldehyde-3-phosphate dehydrogenase family. As to quaternary structure, homotetramer.

The protein localises to the cytoplasm. It catalyses the reaction D-glyceraldehyde 3-phosphate + phosphate + NADP(+) = (2R)-3-phospho-glyceroyl phosphate + NADPH + H(+). The catalysed reaction is D-glyceraldehyde 3-phosphate + phosphate + NAD(+) = (2R)-3-phospho-glyceroyl phosphate + NADH + H(+). The protein operates within carbohydrate degradation; glycolysis; pyruvate from D-glyceraldehyde 3-phosphate: step 1/5. The chain is Glyceraldehyde-3-phosphate dehydrogenase from Methanobrevibacter smithii (strain ATCC 35061 / DSM 861 / OCM 144 / PS).